The chain runs to 416 residues: CC-adding tRNA nucleotidyltransferase (416 aa).

Residue 31–34 participates in CTP binding; the sequence is GAVR. Mg(2+)-binding residues include Asp-46 and Asp-48. Residues 106–107, Asn-111, 148–157, and Arg-188 contribute to the CTP site; these read RD and DPLRLLRAYR.

Belongs to the tRNA nucleotidyltransferase/poly(A) polymerase family. Mg(2+) is required as a cofactor.

It catalyses the reaction a tRNA precursor + 2 CTP = a tRNA with a 3' CC end + 2 diphosphate. Its function is as follows. tRNA nucleotidyltransferase involved in the synthesis of the tRNA CCA terminus. Adds the two cytidine residues to tRNA. This is CC-adding tRNA nucleotidyltransferase from Synechocystis sp. (strain ATCC 27184 / PCC 6803 / Kazusa).